We begin with the raw amino-acid sequence, 364 residues long: DNA polymerase IV (364 aa).

Positions isoleucine 14–glycine 198 constitute a UmuC domain. Residues aspartate 18 and aspartate 116 each contribute to the Mg(2+) site. Glutamate 117 is a catalytic residue.

It belongs to the DNA polymerase type-Y family. In terms of assembly, monomer. It depends on Mg(2+) as a cofactor.

It localises to the cytoplasm. The catalysed reaction is DNA(n) + a 2'-deoxyribonucleoside 5'-triphosphate = DNA(n+1) + diphosphate. Its function is as follows. Poorly processive, error-prone DNA polymerase involved in untargeted mutagenesis. Copies undamaged DNA at stalled replication forks, which arise in vivo from mismatched or misaligned primer ends. These misaligned primers can be extended by PolIV. Exhibits no 3'-5' exonuclease (proofreading) activity. May be involved in translesional synthesis, in conjunction with the beta clamp from PolIII. This chain is DNA polymerase IV, found in Streptococcus agalactiae serotype Ia (strain ATCC 27591 / A909 / CDC SS700).